The primary structure comprises 451 residues: F-box/LRR-repeat protein 13 (451 aa).

The F-box domain maps to 17-70 (VDWISKLPDCLLCEVLLNLPTKDVVKTSVLSRRWRNLWKHVPGLDLDNTDFQEF). LRR repeat units lie at residues 128–155 (DDSY…KLCG), 177–202 (TKFA…TIER), 224–251 (VADS…RLSD), and 335–363 (CVEF…VVKS). One can recognise an FBD domain in the interval 370 to 421 (GENIILPGPRRFLSSLEYVKIERPLKGEAMEMKLVSYLLENSTILKKLTLCL).

The chain is F-box/LRR-repeat protein 13 (FBL13) from Arabidopsis thaliana (Mouse-ear cress).